Reading from the N-terminus, the 1615-residue chain is DNA-directed RNA polymerase I subunit rpa1 (1615 aa).

C65, C68, C75, and H78 together coordinate Zn(2+). Residues 155–181 (GKSNEEGEEVMESDESDSDKMDTDENK) are disordered. Residues 160-171 (EGEEVMESDESD) are compositionally biased toward acidic residues. Residues 172–181 (SDKMDTDENK) are compositionally biased toward basic and acidic residues. Mg(2+) is bound by residues D593, D595, and D597. A bridging helix region spans residues 955-967 (PQDYFFHCMAGRE). Residues 1305 to 1316 (DSLTINDDDAPA) are compositionally biased toward acidic residues. The segment at 1305 to 1411 (DSLTINDDDA…NSRSSNSFSD (107 aa)) is disordered. Residues 1317 to 1336 (NDDTTNNDENTSQQQPSSQN) show a composition bias toward low complexity. Residues 1366–1399 (EDGEEEAEEKDSDEGESEAEESDDKSDVDSDSDE) show a composition bias toward acidic residues. A compositionally biased stretch (low complexity) spans 1400 to 1411 (ISNSRSSNSFSD).

Belongs to the RNA polymerase beta' chain family. As to quaternary structure, component of the RNA polymerase I (Pol I) complex consisting of at least 13 subunits.

The protein resides in the nucleus. It catalyses the reaction RNA(n) + a ribonucleoside 5'-triphosphate = RNA(n+1) + diphosphate. Its function is as follows. DNA-dependent RNA polymerase catalyzes the transcription of DNA into RNA using the four ribonucleoside triphosphates as substrates. Largest and catalytic core component of RNA polymerase I which synthesizes ribosomal RNA precursors. Forms the polymerase active center together with the second largest subunit. A single stranded DNA template strand of the promoter is positioned within the central active site cleft of Pol I. A bridging helix emanates from RPA1 and crosses the cleft near the catalytic site and is thought to promote translocation of Pol I by acting as a ratchet that moves the RNA-DNA hybrid through the active site by switching from straight to bent conformations at each step of nucleotide addition. The polypeptide is DNA-directed RNA polymerase I subunit rpa1 (polr1a) (Dictyostelium discoideum (Social amoeba)).